The sequence spans 290 residues: Bifunctional protein FolD (290 aa).

Residues 166–168, Ser191, and Ile232 each bind NADP(+); that span reads GQS.

This sequence belongs to the tetrahydrofolate dehydrogenase/cyclohydrolase family. Homodimer.

It catalyses the reaction (6R)-5,10-methylene-5,6,7,8-tetrahydrofolate + NADP(+) = (6R)-5,10-methenyltetrahydrofolate + NADPH. The catalysed reaction is (6R)-5,10-methenyltetrahydrofolate + H2O = (6R)-10-formyltetrahydrofolate + H(+). It participates in one-carbon metabolism; tetrahydrofolate interconversion. In terms of biological role, catalyzes the oxidation of 5,10-methylenetetrahydrofolate to 5,10-methenyltetrahydrofolate and then the hydrolysis of 5,10-methenyltetrahydrofolate to 10-formyltetrahydrofolate. In Halorhodospira halophila (strain DSM 244 / SL1) (Ectothiorhodospira halophila (strain DSM 244 / SL1)), this protein is Bifunctional protein FolD.